The following is a 153-amino-acid chain: uncharacterized protein (153 aa).

An N-terminal signal peptide occupies residues 1–19 (MKACLLLFFYFSFICQLHG).

This is an uncharacterized protein from Escherichia coli (strain K12).